The chain runs to 446 residues: tRNA modification GTPase MnmE (446 aa).

(6S)-5-formyl-5,6,7,8-tetrahydrofolate is bound by residues Arg22, Glu80, and Lys119. The TrmE-type G domain maps to 215 to 370 (GLSLVIAGRP…LKKVIKQVVG (156 aa)). K(+) is bound at residue Asn225. GTP-binding positions include 225 to 230 (NAGKST), 244 to 250 (TEIAGTT), and 269 to 272 (DTAG). Position 229 (Ser229) interacts with Mg(2+). Residues Thr244, Ile246, and Thr249 each contribute to the K(+) site. Thr250 is a binding site for Mg(2+). (6S)-5-formyl-5,6,7,8-tetrahydrofolate is bound at residue Lys446.

This sequence belongs to the TRAFAC class TrmE-Era-EngA-EngB-Septin-like GTPase superfamily. TrmE GTPase family. As to quaternary structure, homodimer. Heterotetramer of two MnmE and two MnmG subunits. K(+) serves as cofactor.

Its subcellular location is the cytoplasm. Exhibits a very high intrinsic GTPase hydrolysis rate. Involved in the addition of a carboxymethylaminomethyl (cmnm) group at the wobble position (U34) of certain tRNAs, forming tRNA-cmnm(5)s(2)U34. This is tRNA modification GTPase MnmE from Legionella pneumophila subsp. pneumophila (strain Philadelphia 1 / ATCC 33152 / DSM 7513).